A 588-amino-acid polypeptide reads, in one-letter code: Zinc finger protein 599 (588 aa).

Residues 9 to 80 form the KRAB domain; sequence VSFEDVVVTF…KRGLSQSTCA (72 aa). 14 C2H2-type zinc fingers span residues 199–221, 227–249, 255–277, 283–305, 311–333, 339–361, 367–389, 395–417, 423–445, 451–473, 479–501, 507–529, 535–557, and 563–585; these read YTCT…QQIH, YECN…MRLH, YKCI…QRIH, YECK…NMTH, FLCK…MRIH, YECG…NVTH, YECG…KRTH, FECK…MRIH, YECS…NRTH, LECK…MRIH, YVCR…NRIH, FECK…MRTH, and FECN…RKIH.

This sequence belongs to the krueppel C2H2-type zinc-finger protein family.

The protein resides in the nucleus. Functionally, may be involved in transcriptional regulation. In Homo sapiens (Human), this protein is Zinc finger protein 599 (ZNF599).